We begin with the raw amino-acid sequence, 187 residues long: Elongation factor P (187 aa).

It belongs to the elongation factor P family.

The protein resides in the cytoplasm. Its pathway is protein biosynthesis; polypeptide chain elongation. Its function is as follows. Involved in peptide bond synthesis. Stimulates efficient translation and peptide-bond synthesis on native or reconstituted 70S ribosomes in vitro. Probably functions indirectly by altering the affinity of the ribosome for aminoacyl-tRNA, thus increasing their reactivity as acceptors for peptidyl transferase. The chain is Elongation factor P from Mycolicibacterium vanbaalenii (strain DSM 7251 / JCM 13017 / BCRC 16820 / KCTC 9966 / NRRL B-24157 / PYR-1) (Mycobacterium vanbaalenii).